The sequence spans 92 residues: Small ribosomal subunit protein uS19c (92 aa).

This sequence belongs to the universal ribosomal protein uS19 family.

It localises to the plastid. The protein localises to the chloroplast. Functionally, protein S19 forms a complex with S13 that binds strongly to the 16S ribosomal RNA. In Cucumis sativus (Cucumber), this protein is Small ribosomal subunit protein uS19c.